The sequence spans 301 residues: Probable alpha-L-glutamate ligase (301 aa).

In terms of domain architecture, ATP-grasp spans L104–E287. Residues K141, E178–Y179, D187, and R211–N213 contribute to the ATP site. Mg(2+) is bound by residues D248, E260, and N262. Residues D248, E260, and N262 each contribute to the Mn(2+) site.

This sequence belongs to the RimK family. Mg(2+) serves as cofactor. Requires Mn(2+) as cofactor.

This chain is Probable alpha-L-glutamate ligase, found in Pseudomonas fluorescens (strain SBW25).